A 315-amino-acid polypeptide reads, in one-letter code: MKFKHKSVLLHETIDNLNPKDGGLYVDATFGGGGHARYLLSKLNKGTVIGFDQDEYAISMAKESFAKELQVGAEPRLMLVHDNFCHLKENLVELGISDGIDGIYYDLGVSSPQFDQPERGFSYRFDARLDMRMDQSQELDAYTIVNTWSQKELSDVLYKYGDEKFSRQIARKIVDRRKEKPIVTTFDLVDVIKDAIPAYARRSGGHPAKKSFQAIRVAVNDELGVLQESLEEAIKLLKPGGRISVITFQSHEDKIVKKIFKKYSEVEIPRGMPMVPADSKPTLRLISRKPIMASSDELEENNRSHSAKLRVAEKL.

Residues 33 to 35 (GGH), aspartate 52, phenylalanine 84, aspartate 106, and glutamine 113 each bind S-adenosyl-L-methionine. A disordered region spans residues 294–315 (SSDELEENNRSHSAKLRVAEKL).

The protein belongs to the methyltransferase superfamily. RsmH family.

It is found in the cytoplasm. The enzyme catalyses cytidine(1402) in 16S rRNA + S-adenosyl-L-methionine = N(4)-methylcytidine(1402) in 16S rRNA + S-adenosyl-L-homocysteine + H(+). In terms of biological role, specifically methylates the N4 position of cytidine in position 1402 (C1402) of 16S rRNA. The polypeptide is Ribosomal RNA small subunit methyltransferase H (Lactobacillus johnsonii (strain CNCM I-12250 / La1 / NCC 533)).